Consider the following 729-residue polypeptide: FYN-binding protein 2 (729 aa).

4 disordered regions span residues 18 to 130 (KFNA…EEKG), 170 to 320 (EGQK…SAEL), 371 to 408 (ELSP…PPKV), and 469 to 490 (VTKE…KTYD). Composition is skewed to polar residues over residues 69 to 81 (GVSQ…TLKS), 89 to 99 (KTSSSSGTPEK), 190 to 216 (GAQT…SSVS), and 226 to 240 (KSPA…SQCQ). Residues 275-284 (GPPPPKPSKP) show a composition bias toward pro residues. The span at 374–402 (PRPKEEENTMEEKESWESEPLEPRKELHP) shows a compositional bias: basic and acidic residues. Residues 473-485 (TPSPSTIRSSSSS) show a composition bias toward low complexity. At Y489 the chain carries Phosphotyrosine. Positions 520-523 (YEDI) match the SH2-binding; to LCP2 motif. The segment at 576–603 (DLGPRSQDDSQDGIIYDDVDTREKESND) is disordered. Over residues 584 to 593 (DSQDGIIYDD) the composition is skewed to acidic residues. Position 591 is a phosphotyrosine (Y591). The span at 594 to 603 (VDTREKESND) shows a compositional bias: basic and acidic residues. Residues 668–728 (LVINRAVACA…LVEHLDFKHQ (61 aa)) form the SH3 domain.

Interacts with SKAP1, LCK and FYN. The phosphorylated form interacts with LCP2. Post-translationally, phosphorylation is required for its function in T-cell activation.

Its subcellular location is the membrane raft. Functionally, adapter protein that plays a role in T-cell receptor (TCR)-mediated activation of signaling pathways. Required for T-cell activation and integrin-mediated T-cell adhesion in response to TCR stimulation. The polypeptide is FYN-binding protein 2 (Mus musculus (Mouse)).